Here is a 977-residue protein sequence, read N- to C-terminus: RNA-binding protein 15 (977 aa).

Composition is skewed to basic and acidic residues over residues Met1–Pro10, Arg35–Pro52, Arg59–Lys72, and Leu98–Asp113. Residues Met1–Ala167 are disordered. Ser109 carries the phosphoserine modification. Low complexity predominate over residues Ser119–Ser130. Over residues Ser135 to Glu150 the composition is skewed to gly residues. Residues Ser151 to Ala160 show a composition bias toward low complexity. Residues Lys170 to Val252 enclose the RRM 1 domain. Phosphoserine is present on residues Ser179, Ser208, and Ser210. A Glycyl lysine isopeptide (Lys-Gly) (interchain with G-Cter in SUMO2) cross-link involves residue Lys246. Phosphoserine occurs at positions 253, 257, and 259. Residues Arg256 to Ala298 are disordered. Position 266 is a phosphotyrosine (Tyr266). Phosphoserine occurs at positions 292, 294, and 365. RRM domains follow at residues Arg374–Ala451 and Thr455–Thr529. Residues Lys406, Lys420, and Lys445 each participate in a glycyl lysine isopeptide (Lys-Gly) (interchain with G-Cter in SUMO2) cross-link. An N6-acetyllysine modification is found at Lys450. 2 stretches are compositionally biased toward basic and acidic residues: residues His555–Tyr581 and Ser613–Arg661. Residues His555 to Ala778 are disordered. Residue Thr568 is modified to Phosphothreonine. An Asymmetric dimethylarginine; alternate; by PRMT1 modification is found at Arg578. Residue Arg578 is modified to Omega-N-methylarginine; alternate; by PRMT1. 6 positions are modified to phosphoserine: Ser622, Ser656, Ser670, Ser674, Ser700, and Ser741. Composition is skewed to basic and acidic residues over residues Arg673–Asp728 and Ser741–Asp750. Lys744 participates in a covalent cross-link: Glycyl lysine isopeptide (Lys-Gly) (interchain with G-Cter in SUMO2). The segment covering Ser752–Asp771 has biased composition (polar residues). Ser765, Ser767, and Ser781 each carry phosphoserine. Residues Val777–Phe956 enclose the SPOC domain. The disordered stretch occupies residues Gly865–Thr884. The segment covering Ser866–Thr884 has biased composition (low complexity). The residue at position 935 (Ser935) is a Phosphoserine.

It belongs to the RRM Spen family. Component of the WMM complex, a N6-methyltransferase complex composed of a catalytic subcomplex, named MAC, and of an associated subcomplex, named MACOM. The MAC subcomplex is composed of METTL3 and METTL14. The MACOM subcomplex is composed of WTAP, ZC3H13, CBLL1/HAKAI, VIRMA, and, in some cases of RBM15 (RBM15 or RBM15B). Also a component of a MACOM-like complex, named WTAP complex, composed of WTAP, ZC3H13, CBLL1, VIRMA, RBM15, BCLAF1 and THRAP3. Interacts with RBPJ. Interacts (via SPOC domain) with SETD1B. Interacts with NXF1, the interaction is required to promote mRNA export. Interacts with SF3B1. In terms of assembly, (Microbial infection) Interacts with Epstein-Barr virus BSFL2/BMLF1. In terms of processing, methylated at Arg-578 by PRMT1, leading to promote ubiquitination by CNOT4 and subsequent degradation by the proteasome. Ubiquitinated by CNOT4 following methylation at Arg-578 by PRMT1.

It localises to the nucleus speckle. Its subcellular location is the nucleus. It is found in the nucleoplasm. The protein resides in the nucleus envelope. The protein localises to the nucleus membrane. Its function is as follows. RNA-binding protein that acts as a key regulator of N6-methyladenosine (m6A) methylation of RNAs, thereby regulating different processes, such as hematopoietic cell homeostasis, alternative splicing of mRNAs and X chromosome inactivation mediated by Xist RNA. Associated component of the WMM complex, a complex that mediates N6-methyladenosine (m6A) methylation of RNAs, a modification that plays a role in the efficiency of mRNA splicing and RNA processing. Plays a key role in m6A methylation, possibly by binding target RNAs and recruiting the WMM complex. Involved in random X inactivation mediated by Xist RNA: acts by binding Xist RNA and recruiting the WMM complex, which mediates m6A methylation, leading to target YTHDC1 reader on Xist RNA and promoting transcription repression activity of Xist. Required for the development of multiple tissues, such as the maintenance of the homeostasis of long-term hematopoietic stem cells and for megakaryocyte (MK) and B-cell differentiation. Regulates megakaryocyte differentiation by regulating alternative splicing of genes important for megakaryocyte differentiation; probably regulates alternative splicing via m6A regulation. Required for placental vascular branching morphogenesis and embryonic development of the heart and spleen. Acts as a regulator of thrombopoietin response in hematopoietic stem cells by regulating alternative splicing of MPL. May also function as an mRNA export factor, stimulating export and expression of RTE-containing mRNAs which are present in many retrotransposons that require to be exported prior to splicing. High affinity binding of pre-mRNA to RBM15 may allow targeting of the mRNP to the export helicase DBP5 in a manner that is independent of splicing-mediated NXF1 deposition, resulting in export prior to splicing. May be implicated in HOX gene regulation. This is RNA-binding protein 15 from Homo sapiens (Human).